Consider the following 601-residue polypeptide: Rhizobactin siderophore biosynthesis protein RhbF (601 aa).

This sequence belongs to the IucA/IucC family.

The protein operates within siderophore biosynthesis; rhizobactin biosynthesis. The sequence is that of Rhizobactin siderophore biosynthesis protein RhbF (rhbF) from Rhizobium meliloti (strain 1021) (Ensifer meliloti).